Consider the following 828-residue polypeptide: Neurotrophin receptor-interacting factor 1 (828 aa).

A KRAB 1 domain is found at 14-85 (VKFEDVSLTF…QREIPQDTLP (72 aa)). A Glycyl lysine isopeptide (Lys-Gly) (interchain with G-Cter in ubiquitin) cross-link involves residue K15. Residues 158–240 (RQKFRHFQYE…ALLENMTSVS (83 aa)) enclose the SCAN box domain. The KRAB 2 domain maps to 280–370 (VTFQDVAVDF…ESILEDGVKE (91 aa)). Disordered stretches follow at residues 328–355 (RELT…RNGT), 377–490 (NQVG…DPIT), and 575–611 (QKGY…LSTS). Polar residues predominate over residues 345–355 (PNTNDLSRNGT). The segment covering 384-394 (EKGHPQKKFSE) has biased composition (basic and acidic residues). A compositionally biased stretch (basic residues) spans 418–433 (KYVKVKQKGTGKRKGR). A compositionally biased stretch (polar residues) spans 458–478 (RSGSTPVTHGSSIKKQQQGSE). Positions 589 to 599 (SWKHIKPHQKG) are enriched in basic residues. Residues 600–611 (SKGERVEELSTS) show a composition bias toward basic and acidic residues. 5 C2H2-type zinc fingers span residues 684-706 (CRCS…KKIH), 712-734 (YMCM…LRIH), 740-762 (FECS…LRTH), 768-790 (YHCE…ERTH), and 796-818 (YVCI…QKTH).

The protein belongs to the krueppel C2H2-type zinc-finger protein family. In terms of assembly, interacts with NGFR/p75(NTR). Interacts (via KRAB 1 domain) with TRAF6. Interacts (when ubiquitinated at Lys-15) with SQSTM1/p62. In terms of processing, ubiquitinated by TRAF6 at Lys-15 through 'Lys-63'-linked polyubiquitination. 'Lys-63'-linked polyubiquitination occurs in response to NGFR/p75(NTR) cleavage by gamma-secretase and promotes binding with the ICD cleavage product of NGFR/p75(NTR), followed by translocation into the nucleus and subsequent apoptosis. In terms of tissue distribution, ubiquitously expressed at low level. Expressed at higher level in testis.

The protein resides in the cytoplasm. It localises to the nucleus. Functionally, transcription regulator involved in NGFR/p75(NTR)-mediated apoptosis. Essential component of the NGFR/p75(NTR) apoptotic pathway: upon ligand-binding and subsequent cleavage of NGFR/p75(NTR), binds to the intracellular domain (ICD) cleavage product of NGFR/p75(NTR), translocates to the nucleus and induces apoptosis, possibly by regulating expression of key regulators of apoptosis. Induces NGFR/p75(NTR)-mediated apoptosis in retina and sympathetic neurons. May also regulate expression of neuronal cholesterol biosynthesis genes. Probably acts as a transcription repressor: specifically binds to the 3'-end of zinc-finger coding genes and recruiting chromatin-modifying proteins such as SETDB1 and TRIM28/KAP1, leading to transcription repression. This is Neurotrophin receptor-interacting factor 1 (Nrif1) from Mus musculus (Mouse).